Reading from the N-terminus, the 339-residue chain is Fructose-1,6-bisphosphatase class 1 (339 aa).

Residues glutamate 91, aspartate 113, leucine 115, and aspartate 116 each contribute to the Mg(2+) site. Substrate-binding positions include 116–119 (DGSS), asparagine 210, and lysine 276. Mg(2+) is bound at residue glutamate 282.

It belongs to the FBPase class 1 family. In terms of assembly, homotetramer. It depends on Mg(2+) as a cofactor.

It localises to the cytoplasm. It carries out the reaction beta-D-fructose 1,6-bisphosphate + H2O = beta-D-fructose 6-phosphate + phosphate. Its pathway is carbohydrate biosynthesis; gluconeogenesis. In Bordetella bronchiseptica (strain ATCC BAA-588 / NCTC 13252 / RB50) (Alcaligenes bronchisepticus), this protein is Fructose-1,6-bisphosphatase class 1.